The sequence spans 314 residues: Ribosomal RNA small subunit methyltransferase H (314 aa).

Residues 34–36, aspartate 53, phenylalanine 82, aspartate 103, and glutamine 110 contribute to the S-adenosyl-L-methionine site; that span reads GGH.

Belongs to the methyltransferase superfamily. RsmH family.

The protein localises to the cytoplasm. The enzyme catalyses cytidine(1402) in 16S rRNA + S-adenosyl-L-methionine = N(4)-methylcytidine(1402) in 16S rRNA + S-adenosyl-L-homocysteine + H(+). Functionally, specifically methylates the N4 position of cytidine in position 1402 (C1402) of 16S rRNA. In Limosilactobacillus fermentum (strain NBRC 3956 / LMG 18251) (Lactobacillus fermentum), this protein is Ribosomal RNA small subunit methyltransferase H.